We begin with the raw amino-acid sequence, 146 residues long: Hemoglobin subunit beta-2 (146 aa).

In terms of domain architecture, Globin spans 2 to 146; the sequence is EWTDFERATI…VVSSLGRQYH (145 aa). Heme b is bound by residues His-63 and His-92.

It belongs to the globin family. Hb2 is a heterotetramer of two alpha chains and two beta-2 chains. Red blood cells.

Involved in oxygen transport from gills to the various peripheral tissues. The polypeptide is Hemoglobin subunit beta-2 (hbb2) (Pseudaphritis urvillii (Congolli)).